Consider the following 1896-residue polypeptide: von Willebrand factor A domain-containing protein 8 (1896 aa).

The transit peptide at 1 to 18 (MHSRILFKGTAAAVAARR) directs the protein to the mitochondrion. An ATP-binding site is contributed by 439 to 446 (GAKGCGKS). The disordered stretch occupies residues 1536 to 1564 (GLDVSSPKHGKIDAKNAPHVGGNQWAGGT). Residues 1705–1887 (RLRVLADVSG…KEIPQILQQI (183 aa)) enclose the VWFA domain.

As to quaternary structure, monomer.

The protein localises to the mitochondrion. Its function is as follows. Exhibits ATPase activity in vitro. This Danio rerio (Zebrafish) protein is von Willebrand factor A domain-containing protein 8 (vwa8).